A 97-amino-acid chain; its full sequence is MPLTANVLYVSNKLDFVFDLQKCFVVEQLQCYNRDSLALVVTSDSVSCPSELVHTKDTFERSQLELLEKAEFSVQIVDHLRLKIRHIVNKYNETFAD.

This is an uncharacterized protein from Orgyia pseudotsugata multicapsid polyhedrosis virus (OpMNPV).